Here is a 409-residue protein sequence, read N- to C-terminus: NADH-quinone oxidoreductase subunit D (409 aa).

Belongs to the complex I 49 kDa subunit family. NDH-1 is composed of 14 different subunits. Subunits NuoB, C, D, E, F, and G constitute the peripheral sector of the complex.

The protein resides in the cell inner membrane. It carries out the reaction a quinone + NADH + 5 H(+)(in) = a quinol + NAD(+) + 4 H(+)(out). Its function is as follows. NDH-1 shuttles electrons from NADH, via FMN and iron-sulfur (Fe-S) centers, to quinones in the respiratory chain. The immediate electron acceptor for the enzyme in this species is believed to be ubiquinone. Couples the redox reaction to proton translocation (for every two electrons transferred, four hydrogen ions are translocated across the cytoplasmic membrane), and thus conserves the redox energy in a proton gradient. This Campylobacter curvus (strain 525.92) protein is NADH-quinone oxidoreductase subunit D.